The chain runs to 209 residues: Large ribosomal subunit protein uL3 (209 aa).

Positions 125–148 are disordered; it reads RHGQSRGPMAHGSRYHRRPGSMGP.

The protein belongs to the universal ribosomal protein uL3 family. Part of the 50S ribosomal subunit. Forms a cluster with proteins L14 and L19.

Its function is as follows. One of the primary rRNA binding proteins, it binds directly near the 3'-end of the 23S rRNA, where it nucleates assembly of the 50S subunit. The protein is Large ribosomal subunit protein uL3 of Lysinibacillus sphaericus (strain C3-41).